The chain runs to 311 residues: tRNA dimethylallyltransferase (311 aa).

11–18 (GPTAVGKT) serves as a coordination point for ATP. Residue 13 to 18 (TAVGKT) participates in substrate binding. Residues 36 to 39 (DSMQ) are interaction with substrate tRNA.

Belongs to the IPP transferase family. Monomer. The cofactor is Mg(2+).

It catalyses the reaction adenosine(37) in tRNA + dimethylallyl diphosphate = N(6)-dimethylallyladenosine(37) in tRNA + diphosphate. In terms of biological role, catalyzes the transfer of a dimethylallyl group onto the adenine at position 37 in tRNAs that read codons beginning with uridine, leading to the formation of N6-(dimethylallyl)adenosine (i(6)A). This chain is tRNA dimethylallyltransferase, found in Clostridioides difficile (strain 630) (Peptoclostridium difficile).